A 424-amino-acid polypeptide reads, in one-letter code: Adenylosuccinate synthetase (424 aa).

GTP is bound by residues 12-18 and 40-42; these read GDEGKGK and GHT. Residue Asp13 is the Proton acceptor of the active site. Residues Asp13 and Gly40 each coordinate Mg(2+). IMP-binding positions include 13–16, 38–41, Thr130, Arg144, Asn220, Thr235, and Arg299; these read DEGK and NAGH. The active-site Proton donor is the His41. 295–301 contributes to the substrate binding site; it reads VTTGRRR. GTP contacts are provided by residues Arg301, 327–329, and 412–414; these read KLD and GTG.

This sequence belongs to the adenylosuccinate synthetase family. Homodimer. Mg(2+) is required as a cofactor.

It localises to the cytoplasm. It carries out the reaction IMP + L-aspartate + GTP = N(6)-(1,2-dicarboxyethyl)-AMP + GDP + phosphate + 2 H(+). Its pathway is purine metabolism; AMP biosynthesis via de novo pathway; AMP from IMP: step 1/2. In terms of biological role, plays an important role in the de novo pathway and in the salvage pathway of purine nucleotide biosynthesis. Catalyzes the first committed step in the biosynthesis of AMP from IMP. In Neosartorya fischeri (strain ATCC 1020 / DSM 3700 / CBS 544.65 / FGSC A1164 / JCM 1740 / NRRL 181 / WB 181) (Aspergillus fischerianus), this protein is Adenylosuccinate synthetase.